The primary structure comprises 207 residues: NAD--protein ADP-ribosyltransferase modB (207 aa).

Residue R73 participates in NAD(+) binding. The active site involves E173.

Belongs to the Tevenvirinae NAD--protein ADP-ribosyltransferase modA family.

It localises to the virion. The enzyme catalyses L-arginyl-[protein] + NAD(+) = N(omega)-(ADP-D-ribosyl)-L-arginyl-[protein] + nicotinamide + H(+). In terms of biological role, ADP-ribosyltransferase that regulates transcription by ADP-ribosylation of host ribosomal protein S1. Additional identified targets include proteins involved in either translation or cellular metabolism such as elongation factor-Tu or trigger factor. Also reprograms the host's gene-expression system by RNAylating host ribosomal protein S1. ModB can attach NAD-capped RNAs to target proteins post-transcriptionally resulting in covalent RNA-protein conjugates. This Enterobacteria phage T4 (Bacteriophage T4) protein is NAD--protein ADP-ribosyltransferase modB.